Reading from the N-terminus, the 384-residue chain is F-box only protein 5 (384 aa).

The tract at residues 25-67 is disordered; it reads EVKGHKVSPRKTGALSLRSPAATNVSTPLESRSKGPHNKENYQ. The span at 45–54 shows a compositional bias: polar residues; it reads AATNVSTPLE. Residues 55–67 are compositionally biased toward basic and acidic residues; the sequence is SRSKGPHNKENYQ. An F-box domain is found at 187–234; the sequence is CKLMRKDMRHILARILGLLGDCDLISCTKVSRTWRKIICQDQLALQRW. The ZBR-type zinc finger occupies 311-359; that stretch reads SLRRCSRCSSPARFDAVMQRAVCTRISCAFEFCTLCQSAFHDSTPCRNT. Zn(2+) contacts are provided by cysteine 315, cysteine 318, cysteine 333, cysteine 338, cysteine 343, cysteine 346, histidine 351, and cysteine 356.

Part of a SCF (SKP1-cullin-F-box) protein ligase complex.

Its subcellular location is the nucleus. The protein localises to the cytoplasm. It functions in the pathway protein modification; protein ubiquitination. Its function is as follows. During embryonic development, regulates the integrity of the genome and therefore the cell cycle progression by preventing rereplication through an APC-Cdh1-dependent mechanism. The protein is F-box only protein 5 of Danio rerio (Zebrafish).